A 267-amino-acid chain; its full sequence is Putative hydro-lyase Arth_3576 (267 aa).

This sequence belongs to the D-glutamate cyclase family.

This is Putative hydro-lyase Arth_3576 from Arthrobacter sp. (strain FB24).